Consider the following 367-residue polypeptide: Aminomethyltransferase (367 aa).

The protein belongs to the GcvT family. As to quaternary structure, the glycine cleavage system is composed of four proteins: P, T, L and H.

It catalyses the reaction N(6)-[(R)-S(8)-aminomethyldihydrolipoyl]-L-lysyl-[protein] + (6S)-5,6,7,8-tetrahydrofolate = N(6)-[(R)-dihydrolipoyl]-L-lysyl-[protein] + (6R)-5,10-methylene-5,6,7,8-tetrahydrofolate + NH4(+). In terms of biological role, the glycine cleavage system catalyzes the degradation of glycine. In Mycobacterium leprae (strain Br4923), this protein is Aminomethyltransferase.